The chain runs to 91 residues: Small ribosomal subunit protein uS15 (91 aa).

Belongs to the universal ribosomal protein uS15 family. As to quaternary structure, part of the 30S ribosomal subunit. Forms a bridge to the 50S subunit in the 70S ribosome, contacting the 23S rRNA.

One of the primary rRNA binding proteins, it binds directly to 16S rRNA where it helps nucleate assembly of the platform of the 30S subunit by binding and bridging several RNA helices of the 16S rRNA. In terms of biological role, forms an intersubunit bridge (bridge B4) with the 23S rRNA of the 50S subunit in the ribosome. The protein is Small ribosomal subunit protein uS15 of Sulfurimonas denitrificans (strain ATCC 33889 / DSM 1251) (Thiomicrospira denitrificans (strain ATCC 33889 / DSM 1251)).